Consider the following 199-residue polypeptide: ATP-dependent Clp protease proteolytic subunit 2 (199 aa).

Residue Ser-98 is the Nucleophile of the active site. The active site involves His-123.

Belongs to the peptidase S14 family. Fourteen ClpP subunits assemble into 2 heptameric rings which stack back to back to give a disk-like structure with a central cavity, resembling the structure of eukaryotic proteasomes.

Its subcellular location is the cytoplasm. It carries out the reaction Hydrolysis of proteins to small peptides in the presence of ATP and magnesium. alpha-casein is the usual test substrate. In the absence of ATP, only oligopeptides shorter than five residues are hydrolyzed (such as succinyl-Leu-Tyr-|-NHMec, and Leu-Tyr-Leu-|-Tyr-Trp, in which cleavage of the -Tyr-|-Leu- and -Tyr-|-Trp bonds also occurs).. In terms of biological role, cleaves peptides in various proteins in a process that requires ATP hydrolysis. Has a chymotrypsin-like activity. Plays a major role in the degradation of misfolded proteins. This is ATP-dependent Clp protease proteolytic subunit 2 from Corynebacterium efficiens (strain DSM 44549 / YS-314 / AJ 12310 / JCM 11189 / NBRC 100395).